The chain runs to 415 residues: Maltose excess protein 1, chloroplastic (415 aa).

Residues 74–93 (SESDSDSDFPHENQQGNPGL) are disordered. Transmembrane regions (helical) follow at residues 139–159 (ALSAVPWLGMLTGLLGNLSLL), 176–196 (LGVVSTHIVLAQLTMAEAMPI), 199–219 (FVATSAVVTIGLIVNCLYYFG), 231–251 (DVITIGGLSVLPQIMWSTFVP), 252–272 (LVPNSILPGTTAFGIAVAAII), 286–306 (FVGSLSGWTATLMFMWMPVSQ), 322–342 (SITMLLSMMGNGLMIPRALFI), 345–365 (LMWLTGSLWATLFYGYGNILC), and 373–393 (SQSFFVAATIGLISWIGLALW).

In terms of tissue distribution, expressed in leaves and roots. Expressed in root cap cells.

The protein resides in the plastid. It is found in the chloroplast inner membrane. In terms of biological role, probable maltose transporter. Essential for the conversion of starch to sucrose in leaves at night, probably via the export of maltose from the chloroplast. Required for root cap cells formation. The sequence is that of Maltose excess protein 1, chloroplastic (MEX1) from Arabidopsis thaliana (Mouse-ear cress).